Reading from the N-terminus, the 214-residue chain is MSLGLVGRKVGMTRVFAEDGQSIPVTVLDMSANRVTQIKTADTDGYNAVQVAYGSKKANRVLKAEAGHFAKAGVEAGRGLKEFTADAAKLAELKVGDTLTVELFQVGQLVDVTGTSQGKGFSGVIKRHNFSSNRASHGNSVTTRAPGSIGQAQDPGRVFPGKRMAGQYGNVKRTVQSLEVVRIDAERQLLLIKGSVPGSKGNDVVVLPAVKAGA.

Positions 132 to 145 (SNRASHGNSVTTRA) are enriched in polar residues. The interval 132 to 155 (SNRASHGNSVTTRAPGSIGQAQDP) is disordered. Glutamine 153 carries the N5-methylglutamine modification.

The protein belongs to the universal ribosomal protein uL3 family. Part of the 50S ribosomal subunit. Forms a cluster with proteins L14 and L19. In terms of processing, methylated by PrmB.

In terms of biological role, one of the primary rRNA binding proteins, it binds directly near the 3'-end of the 23S rRNA, where it nucleates assembly of the 50S subunit. This Laribacter hongkongensis (strain HLHK9) protein is Large ribosomal subunit protein uL3.